The primary structure comprises 305 residues: UDP-3-O-acyl-N-acetylglucosamine deacetylase (305 aa).

Zn(2+) contacts are provided by His-78, His-237, and Asp-241. His-264 serves as the catalytic Proton donor.

This sequence belongs to the LpxC family. The cofactor is Zn(2+).

It carries out the reaction a UDP-3-O-[(3R)-3-hydroxyacyl]-N-acetyl-alpha-D-glucosamine + H2O = a UDP-3-O-[(3R)-3-hydroxyacyl]-alpha-D-glucosamine + acetate. It functions in the pathway glycolipid biosynthesis; lipid IV(A) biosynthesis; lipid IV(A) from (3R)-3-hydroxytetradecanoyl-[acyl-carrier-protein] and UDP-N-acetyl-alpha-D-glucosamine: step 2/6. In terms of biological role, catalyzes the hydrolysis of UDP-3-O-myristoyl-N-acetylglucosamine to form UDP-3-O-myristoylglucosamine and acetate, the committed step in lipid A biosynthesis. The polypeptide is UDP-3-O-acyl-N-acetylglucosamine deacetylase (Ralstonia pickettii (strain 12J)).